A 305-amino-acid chain; its full sequence is Glycine--tRNA ligase alpha subunit (305 aa).

Belongs to the class-II aminoacyl-tRNA synthetase family. Tetramer of two alpha and two beta subunits.

It is found in the cytoplasm. It catalyses the reaction tRNA(Gly) + glycine + ATP = glycyl-tRNA(Gly) + AMP + diphosphate. This is Glycine--tRNA ligase alpha subunit from Heliobacterium modesticaldum (strain ATCC 51547 / Ice1).